The sequence spans 456 residues: tRNA modification GTPase MnmE (456 aa).

Arg24, Glu81, and Lys120 together coordinate (6S)-5-formyl-5,6,7,8-tetrahydrofolate. A TrmE-type G domain is found at 216–379 (GMTVVIAGRP…LRDHLKACMG (164 aa)). Asn226 is a binding site for K(+). Residues 226–231 (NAGKSS), 245–251 (TAIAGTT), 270–273 (DTAG), and 335–338 (NKAD) each bind GTP. Ser230 is a binding site for Mg(2+). K(+) is bound by residues Thr245, Ile247, and Thr250. Thr251 provides a ligand contact to Mg(2+). Lys456 serves as a coordination point for (6S)-5-formyl-5,6,7,8-tetrahydrofolate.

This sequence belongs to the TRAFAC class TrmE-Era-EngA-EngB-Septin-like GTPase superfamily. TrmE GTPase family. Homodimer. Heterotetramer of two MnmE and two MnmG subunits. It depends on K(+) as a cofactor.

The protein resides in the cytoplasm. In terms of biological role, exhibits a very high intrinsic GTPase hydrolysis rate. Involved in the addition of a carboxymethylaminomethyl (cmnm) group at the wobble position (U34) of certain tRNAs, forming tRNA-cmnm(5)s(2)U34. The polypeptide is tRNA modification GTPase MnmE (Pseudomonas putida (strain W619)).